We begin with the raw amino-acid sequence, 322 residues long: Cytochrome c biogenesis protein CcsA (322 aa).

A run of 8 helical transmembrane segments spans residues 15–35 (FSIVSIIITMRLISFFLVDGI), 45–65 (GMIVTFLCLTGLLVTRWTYSG), 72–92 (LYESLIFLSWSFSLIHIVPYF), 98–120 (YLSTITGSSVVFTQGFTTSGLLT), 144–164 (MILGYASLLCGSLLSIALLVI), 226–246 (GISLGFIFLTIGILSGAVWAN), 253–273 (WNWDPKETWAFITWIIFAIYL), and 287–307 (AIVASIGFLIIWICYFGVNLL).

It belongs to the CcmF/CycK/Ccl1/NrfE/CcsA family. In terms of assembly, may interact with Ccs1.

It is found in the plastid. The protein resides in the chloroplast thylakoid membrane. Functionally, required during biogenesis of c-type cytochromes (cytochrome c6 and cytochrome f) at the step of heme attachment. The chain is Cytochrome c biogenesis protein CcsA from Coffea arabica (Arabian coffee).